A 956-amino-acid chain; its full sequence is Transient receptor potential channel pyrexia (956 aa).

The Cytoplasmic portion of the chain corresponds to 1–491 (MENVRFSIIE…LFLKWRRIRK (491 aa)). ANK repeat units lie at residues 132–161 (RGRT…DPNR), 166–195 (KEVT…SINI), 198–227 (EKRS…DPNT), 231–260 (YTET…DVRS), 265–294 (GKVT…EVDC), 298–327 (SHQT…NVNA), 331–362 (DGRT…DVNK), and 366–395 (YGYT…DITA). A helical membrane pass occupies residues 492–512 (FFLMSLAYHTLFVILFTFYVI). Over 513 to 525 (WVYVRCCKKEELC) the chain is Extracellular. The helical transmembrane segment at 526-546 (VAPGYVSTIGYLVIILNLILL) threads the bilayer. Residues 547–565 (GKEVFQMAHGLRGYAKYWE) are Cytoplasmic-facing. The chain crosses the membrane as a helical span at residues 566–584 (NWLQWTIGTGVLLCVTPET). The Extracellular segment spans residues 585–601 (VRTDDLTAVPVWQHHVA). Residues 602-622 (AIVILLVWLELMMLVGRFPIF) form a helical membrane-spanning segment. The Cytoplasmic segment spans residues 623 to 638 (GVYVQMFTKVAVNFAK). A helical membrane pass occupies residues 639-659 (FLLAYICLLVAFGLSFAVLFN). The Extracellular portion of the chain corresponds to 660-701 (DYPAFENITWSFLKSITMMSGELEFEDIFYGDYAVKFPVTAH). Residue N666 is glycosylated (N-linked (GlcNAc...) asparagine). Residues 702–722 (IIFLSFVLLVTVILTNLMVGL) traverse the membrane as a helical segment. Residues 723-956 (AVSDIQGLQV…VASSHIRRHR (234 aa)) lie on the Cytoplasmic side of the membrane.

Belongs to the transient receptor (TC 1.A.4) family. STrpC subfamily. Homooligomer; between isoform A and isoform B. As to expression, expressed in various peripheral nerves and the central nerves in embryos. In adults, it is expressed in sensory neurons lying beneath the bristles around eyes, neurons innervating the bristles on the back of thorax and neurons in maxillary palps, proboscis and antennae. Expressed in multidendritic neurons, which mediate temperature sensing, as well as non-multidendritic neurons in larval epidermis. Localizes ubiquitously throughout neurites.

The protein localises to the membrane. Functionally, receptor-activated non-selective cation channel involved in protection or tolerance from high temperature stress. Activated by temperatures above 40 degrees Celsius. More permeable to K(+) than to Na(+). May act in stress protection allow flies to survive in natural environments. This is Transient receptor potential channel pyrexia (pyx) from Drosophila melanogaster (Fruit fly).